A 34-amino-acid chain; its full sequence is MINKTTIKTVLITLGVLAAVNKVSALRSVKRLIS.

Residues 10 to 26 form a helical membrane-spanning segment; that stretch reads VLITLGVLAAVNKVSAL.

The protein localises to the virion membrane. Exolysin that catalyzes the cleavage of the host peptidoglycans during virus entry. The protein is Peptidoglycan hydrolase P7 (VII) of Pseudoalteromonas espejiana (Bacteriophage PM2).